The sequence spans 92 residues: Small nuclear ribonucleoprotein E (92 aa).

Residues 18–92 enclose the Sm domain; sequence INLIFRYLQN…NITLLQSVSN (75 aa).

It belongs to the snRNP Sm proteins family. As to quaternary structure, core component of the spliceosomal U1, U2, U4 and U5 small nuclear ribonucleoproteins (snRNPs), the building blocks of the spliceosome. Most spliceosomal snRNPs contain a common set of Sm proteins, snrpb, snrpd1, snrpd2, snrpd3, snrpe, snrpf and snrpg that assemble in a heptameric protein ring on the Sm site of the small nuclear RNA to form the core snRNP. Component of the U1 snRNP. The U1 snRNP is composed of the U1 snRNA and the 7 core Sm proteins snrpb, snrpd1, snrpd2, snrpd3, snrpe, snrpf and snrpg, and at least three U1 snRNP-specific proteins snrnp70/u1-70k, snrpa/u1-a and snrpc/u1-c. Component of the U4/U6-U5 tri-snRNP complex composed of the U4, U6 and U5 snRNAs and at least prpf3, prpf4, prpf6, prpf8, prpf31, snrnp200, txnl4a, snrnp40, snrpb, snrpd1, snrpd2, snrpd3, snrpe, snrpf, snrpg, ddx23, cd2bp2, ppih, snu13, eftud2, sart1 and usp39, plus lsm2, lsm3, lsm4, lsm5, lsm6, lsm7 and lsm8. Component of the U7 snRNP complex, or U7 Sm protein core complex, that is composed of the U7 snRNA and at least lsm10, lsm11, snrpb, snrpd3, snrpe, snrpf and snrpg; the complex does not contain snrpd1 and snrpd2. Component of the minor spliceosome, which splices U12-type introns. Part of the SMN-Sm complex that contains smn1, gemin2/sip1, ddx20/gemin3, gemin4, gemin5, gemin6, gemin7, gemin8, strap/unrip and the Sm proteins snrpb, snrpd1, snrpd2, snrpd3, snrpe, snrpf and snrpg; catalyzes core snRNPs assembly. Forms a 6S pICln-Sm complex composed of clns1a/pICln, snrpd1, snrpd2, snrpe, snrpf and snrpg; ring-like structure where clns1a/pICln mimics additional Sm proteins and which is unable to assemble into the core snRNP.

The protein localises to the cytoplasm. It localises to the cytosol. The protein resides in the nucleus. Its function is as follows. Plays a role in pre-mRNA splicing as a core component of the spliceosomal U1, U2, U4 and U5 small nuclear ribonucleoproteins (snRNPs), the building blocks of the spliceosome. Component of both the pre-catalytic spliceosome B complex and activated spliceosome C complexes. As a component of the minor spliceosome, involved in the splicing of U12-type introns in pre-mRNAs. As part of the U7 snRNP it is involved in histone 3'-end processing. The sequence is that of Small nuclear ribonucleoprotein E (snrpe) from Danio rerio (Zebrafish).